Reading from the N-terminus, the 337-residue chain is Protoheme IX farnesyltransferase (337 aa).

The span at M1–V17 shows a compositional bias: polar residues. A disordered region spans residues M1–R41. Positions D27–R41 are enriched in basic and acidic residues. 8 helical membrane-spanning segments follow: residues I59–P79, L81–F101, S130–A150, L153–L173, W196–W216, V250–P270, V271–V291, and P311–V331.

This sequence belongs to the UbiA prenyltransferase family. Protoheme IX farnesyltransferase subfamily.

It localises to the cell membrane. It catalyses the reaction heme b + (2E,6E)-farnesyl diphosphate + H2O = Fe(II)-heme o + diphosphate. Its pathway is porphyrin-containing compound metabolism; heme O biosynthesis; heme O from protoheme: step 1/1. Converts heme B (protoheme IX) to heme O by substitution of the vinyl group on carbon 2 of heme B porphyrin ring with a hydroxyethyl farnesyl side group. The polypeptide is Protoheme IX farnesyltransferase (Cutibacterium acnes (strain DSM 16379 / KPA171202) (Propionibacterium acnes)).